We begin with the raw amino-acid sequence, 195 residues long: U8 snoRNA-decapping enzyme (195 aa).

Residues 18 to 168 (GWRHACHAML…LENTFIGNAR (151 aa)) enclose the Nudix hydrolase domain. The substrate site is built by histidine 24, arginine 50, and phenylalanine 57. Mn(2+)-binding residues include glycine 59, glutamate 76, glutamate 80, and histidine 99. Residues 61–82 (FVDLRDGSLEDGLNRELGEELG) carry the Nudix box motif. Substrate is bound by residues asparagine 166 and glutamine 170. A Mn(2+)-binding site is contributed by glutamate 173.

This sequence belongs to the Nudix hydrolase family. NUDT16 subfamily. In terms of assembly, homodimer. It depends on Mg(2+) as a cofactor. The cofactor is Mn(2+). Requires Co(2+) as cofactor.

It localises to the nucleus. It is found in the nucleolus. Its subcellular location is the nucleoplasm. The protein resides in the cytoplasm. It carries out the reaction a 5'-end (N(7)-methyl 5'-triphosphoguanosine)-ribonucleoside in mRNA + H2O = N(7)-methyl-GDP + a 5'-end phospho-ribonucleoside in mRNA + 2 H(+). It catalyses the reaction IDP + H2O = IMP + phosphate + H(+). The catalysed reaction is dIDP + H2O = dIMP + phosphate + H(+). The enzyme catalyses a 5'-end NAD(+)-phospho-ribonucleoside in mRNA + H2O = a 5'-end phospho-ribonucleoside in mRNA + NAD(+) + H(+). It carries out the reaction a 5'-end FAD-phospho-ribonucleoside in mRNA + H2O = a 5'-end phospho-adenosine-phospho-ribonucleoside in mRNA + FMN + 2 H(+). It catalyses the reaction a 5'-end CoA-ribonucleoside in mRNA + H2O = a 5'-end phospho-adenosine-phospho-ribonucleoside in mRNA + (R)-4'-phosphopantetheine + 2 H(+). Its function is as follows. RNA-binding and decapping enzyme that catalyzes the cleavage of the cap structure of snoRNAs and mRNAs in a metal-dependent manner. Part of the U8 snoRNP complex that is required for the accumulation of mature 5.8S and 28S rRNA. Has diphosphatase activity and removes m7G and/or m227G caps from U8 snoRNA and leaves a 5'monophosphate on the RNA. Also catalyzes the cleavage of the cap structure on mRNAs. Does not hydrolyze cap analog structures like 7-methylguanosine nucleoside triphosphate (m7GpppG). Also hydrolysis m7G- and m227G U3-capped RNAs but with less efficiencies. Has broad substrate specificity with manganese or cobalt as cofactor and can act on various RNA species. Binds to the U8 snoRNA; metal is not required for RNA-binding. May play a role in the regulation of snoRNAs and mRNAs degradation. Also acts as a phosphatase; hydrolyzes the non-canonical purine nucleotides inosine diphosphate (IDP) and deoxyinosine diphosphate (dITP) as well as guanosine diphosphate (GDP), deoxyguanosine diphosphate (dGDP), xanthine diphosphate (XDP), inosine triphosphate (ITP) and deoxyinosine triphosphate (ITP) to their respective monophosphate derivatives and does not distinguish between the deoxy- and ribose forms. The order of activity with different substrates is IDP &gt; dIDP &gt;&gt; GDP = dGDP &gt; XDP = ITP = dITP. Binds strongly to GTP, ITP and XTP. Participates in the hydrolysis of dIDP/IDP and probably excludes non-canonical purines from RNA and DNA precursor pools, thus preventing their incorporation into RNA and DNA and avoiding chromosomal lesions. Exhibits decapping activity towards NAD-capped RNAs and FAD-capped RNAs. Exhibits decapping activity towards dpCoA-capped RNAs in vitro. This is U8 snoRNA-decapping enzyme (NUDT16) from Ovis aries (Sheep).